Reading from the N-terminus, the 901-residue chain is Protein translocase subunit SecA (901 aa).

ATP contacts are provided by residues Q87, G105–T109, and D512. The segment at Q855 to K891 is disordered. Residues C885, C887, C896, and H897 each contribute to the Zn(2+) site.

This sequence belongs to the SecA family. In terms of assembly, monomer and homodimer. Part of the essential Sec protein translocation apparatus which comprises SecA, SecYEG and auxiliary proteins SecDF-YajC and YidC. The cofactor is Zn(2+).

The protein localises to the cell inner membrane. Its subcellular location is the cytoplasm. It carries out the reaction ATP + H2O + cellular proteinSide 1 = ADP + phosphate + cellular proteinSide 2.. Its function is as follows. Part of the Sec protein translocase complex. Interacts with the SecYEG preprotein conducting channel. Has a central role in coupling the hydrolysis of ATP to the transfer of proteins into and across the cell membrane, serving both as a receptor for the preprotein-SecB complex and as an ATP-driven molecular motor driving the stepwise translocation of polypeptide chains across the membrane. The chain is Protein translocase subunit SecA from Cronobacter sakazakii (strain ATCC BAA-894) (Enterobacter sakazakii).